Reading from the N-terminus, the 274-residue chain is Non-homologous end joining protein Ku (274 aa).

The 185-residue stretch at 11–195 (ITFGLVNVPV…KYKITPKELS (185 aa)) folds into the Ku domain.

Belongs to the prokaryotic Ku family. Homodimer. Interacts with LigD.

Functionally, with LigD forms a non-homologous end joining (NHEJ) DNA repair enzyme, which repairs dsDNA breaks with reduced fidelity. Binds linear dsDNA with 5'- and 3'- overhangs but not closed circular dsDNA nor ssDNA. Recruits and stimulates the ligase activity of LigD. The sequence is that of Non-homologous end joining protein Ku from Coxiella burnetii (strain RSA 331 / Henzerling II).